The primary structure comprises 219 residues: 7-cyano-7-deazaguanine synthase (219 aa).

An ATP-binding site is contributed by 10–20 (FSGGQDSTTCL). Zn(2+)-binding residues include Cys-187, Cys-196, Cys-199, and Cys-202.

It belongs to the QueC family. As to quaternary structure, homodimer. Requires Zn(2+) as cofactor.

The catalysed reaction is 7-carboxy-7-deazaguanine + NH4(+) + ATP = 7-cyano-7-deazaguanine + ADP + phosphate + H2O + H(+). It participates in purine metabolism; 7-cyano-7-deazaguanine biosynthesis. Its function is as follows. Catalyzes the ATP-dependent conversion of 7-carboxy-7-deazaguanine (CDG) to 7-cyano-7-deazaguanine (preQ(0)). This Lysinibacillus sphaericus (strain C3-41) protein is 7-cyano-7-deazaguanine synthase.